The sequence spans 427 residues: UPF0229 protein YeaH (427 aa).

A compositionally biased stretch (basic and acidic residues) spans 79 to 90 (NDHFVQNDRIER). Residues 79–110 (NDHFVQNDRIERPQGGGGGSGSGQGQASQDGE) form a disordered region. Residues 92 to 102 (QGGGGGSGSGQ) show a composition bias toward gly residues.

Belongs to the UPF0229 family.

The polypeptide is UPF0229 protein YeaH (Escherichia coli O127:H6 (strain E2348/69 / EPEC)).